The sequence spans 142 residues: Transcriptional regulator MraZ (142 aa).

SpoVT-AbrB domains follow at residues 5-47 and 76-119; these read EYPY…PLPG and ASKA…NPQR.

It belongs to the MraZ family. As to quaternary structure, forms oligomers.

It localises to the cytoplasm. The protein resides in the nucleoid. This is Transcriptional regulator MraZ from Deinococcus radiodurans (strain ATCC 13939 / DSM 20539 / JCM 16871 / CCUG 27074 / LMG 4051 / NBRC 15346 / NCIMB 9279 / VKM B-1422 / R1).